Consider the following 590-residue polypeptide: Sperm-associated microtubule inner protein 4 (590 aa).

Threonine 219 bears the Phosphothreonine mark. Residues serine 407 and serine 422 each carry the phosphoserine modification. Residue lysine 427 forms a Glycyl lysine isopeptide (Lys-Gly) (interchain with G-Cter in SUMO2) linkage. Phosphotyrosine is present on tyrosine 442. Serine 485 carries the phosphoserine modification. Lysine 545 is covalently cross-linked (Glycyl lysine isopeptide (Lys-Gly) (interchain with G-Cter in SUMO2)). A Phosphoserine modification is found at serine 547.

In terms of tissue distribution, predominantly expressed in the testes.

It is found in the cytoplasm. The protein localises to the cytoskeleton. Its subcellular location is the microtubule organizing center. The protein resides in the centrosome. It localises to the flagellum axoneme. Its function is as follows. Microtubule inner protein (MIP) part of the dynein-decorated doublet microtubules (DMTs) in flagellum axoneme. May serve to reinforce and thus stabilize the microtubule structure in the sperm flagella. The polypeptide is Sperm-associated microtubule inner protein 4 (Homo sapiens (Human)).